The sequence spans 5386 residues: Nonribosomal peptide synthetase 2 (5386 aa).

Positions 45-435 (HDANAIDFLE…QGLLECLGRV (391 aa)) are adenylation 1. Positions 544 to 617 (SPKDPIGHSV…DLIEVCRESK (74 aa)) constitute a Carrier 1 domain. At Ser578 the chain carries O-(pantetheine 4'-phosphoryl)serine. Residues 652–1059 (LPCTPLQEAM…VDADRHVSAI (408 aa)) are condensation 1. The interval 1089-1482 (EKWAATDPHR…GRTDDQVKIR (394 aa)) is adenylation 2. Positions 1611–1688 (ELLSQWERDV…SLASLKKLQS (78 aa)) constitute a Carrier 2 domain. O-(pantetheine 4'-phosphoryl)serine is present on Ser1648. Positions 1731-2141 (ILPCTPLQEA…ALSADTDMFP (411 aa)) are condensation 2. The segment at 2166–2551 (FERTALLHPD…GRLDDQVKIR (386 aa)) is adenylation 3. One can recognise a Carrier 3 domain in the interval 2652–2725 (SKTESEVRNI…DLAEHLDQIS (74 aa)). Ser2686 is modified (O-(pantetheine 4'-phosphoryl)serine). A condensation 3 region spans residues 2763–3174 (RPCTPLQNGM…HSQIPLAKTD (412 aa)). The adenylation 4 stretch occupies residues 3202–3603 (EKTAQEHPQR…GRADDQVKLR (402 aa)). The region spanning 3728 to 3805 (EQWSKQEEKL…RLAKSLAANS (78 aa)) is the Carrier 4 domain. The residue at position 3765 (Ser3765) is an O-(pantetheine 4'-phosphoryl)serine. The condensation 4 stretch occupies residues 3846 to 4250 (LAPCTPLQQG…LDQAINDPSA (405 aa)). A Carrier 5 domain is found at 4281 to 4357 (FEWSDNAIAI…KMAQNMSMKN (77 aa)). Ser4318 is subject to O-(pantetheine 4'-phosphoryl)serine. The interval 4391–4802 (EEILPLTPLQ…ERAEAPVIDM (412 aa)) is condensation 5. The segment at 4821-4842 (HTGSGHVESGEDDGQDTPSTET) is disordered. Residues 4840-4913 (TETTNRIRKI…KMAKLADARA (74 aa)) form the Carrier 6 domain. Residue Ser4874 is modified to O-(pantetheine 4'-phosphoryl)serine. The interval 4952–5257 (QMLPVTAGQL…VQAHLRHLND (306 aa)) is condensation 6.

This sequence belongs to the NRP synthetase family.

Its pathway is siderophore biosynthesis. In terms of biological role, nonribosomal peptide synthetase; part of the gene cluster that mediates the biosynthesis of hydroxamate-containing siderophores that play a critical role in virulence. Cochliobolus heterostrophus produces extracellular coprogen-type siderophores including coprogen, neocoprogen I and neocoprogen II, as well as the intracellular siderophore ferricrocin. The role of extracellular siderophores is to supply iron to the fungus during plant infection, and the intracellular ferricrocin is required for intracellular iron distribution and storage with a crucial role in ascus and ascospore development. SIDA2 catalyzes the conversion of L-ornithine to N(5)-hydroxyornithine, the first step in the biosynthesis of all hydroxamate-containing siderophores. The assembly of extracellular coprogen-type siderophores is then performed by the nonribosomal peptide synthetase (NRPS) NPS6 whereas the intracellular siderophore ferricrocin is assembled by NPS2. This Cochliobolus heterostrophus (strain C4 / ATCC 48331 / race T) (Southern corn leaf blight fungus) protein is Nonribosomal peptide synthetase 2.